Consider the following 1238-residue polypeptide: Chitin synthase 4 (1238 aa).

2 disordered regions span residues 1 to 93 (MAEP…PERN) and 132 to 190 (TVSS…RRQK). The span at 14–34 (TRDKSHSPYRESPSRRLRDVE) shows a compositional bias: basic and acidic residues. The N-linked (GlcNAc...) asparagine glycan is linked to N50. Polar residues-rich tracts occupy residues 71-80 (SNPNPMSQSD) and 133-142 (VSSGSTQQDT). The segment covering 175–190 (RKDTRNLTEEEKRRQK) has biased composition (basic and acidic residues). N180 carries an N-linked (GlcNAc...) asparagine glycan. 2 consecutive transmembrane segments (helical) span residues 200-220 (IWNIYCAVVTFWAPDCLLQCF) and 235-255 (VGLISIILLIAAFVGFLTFGF). Residues N365, N404, and N426 are each glycosylated (N-linked (GlcNAc...) asparagine). Residues 487-507 (VVLYVSLVFILAIVAAKFFLA) form a helical membrane-spanning segment. Disordered stretches follow at residues 548–570 (PKITDPASTVTGSDGRTSKRGSM) and 582–606 (YAVDRRSSRPPPTTMTSQSSNAKLL). The span at 553 to 562 (PASTVTGSDG) shows a compositional bias: polar residues. 3 N-linked (GlcNAc...) asparagine glycosylation sites follow: N617, N903, and N1030. 3 consecutive transmembrane segments (helical) span residues 1062-1082 (IGTLVLPAAISFTFYLIILSI), 1087-1107 (VPVIPLVLLALILGLPAILIV), and 1115-1135 (YILWMGIYLLSLPIWNFVLPA).

This sequence belongs to the chitin synthase family. Class IV subfamily. Post-translationally, maximal activity requires trypsin activation, suggesting a zymogenic nature.

It is found in the cell membrane. It carries out the reaction [(1-&gt;4)-N-acetyl-beta-D-glucosaminyl](n) + UDP-N-acetyl-alpha-D-glucosamine = [(1-&gt;4)-N-acetyl-beta-D-glucosaminyl](n+1) + UDP + H(+). With respect to regulation, activity is stimulated by Mg(2+), and is more inhibited by polyoxin D than by nikkomycin. Polymerizes chitin, a structural polymer of the cell wall and septum, by transferring the sugar moiety of UDP-GlcNAc to the non-reducing end of the growing chitin polymer. CHS4 synthesizes a large amount of chitin and appears to play a role in the process of cell separation. CHS4 is particularly well suited for functioning at the higher temperatures associated with its poorly characterized saprophic environment and with human infection. The protein is Chitin synthase 4 of Exophiala dermatitidis (Black yeast-like fungus).